The chain runs to 159 residues: Peptide deformylase (159 aa).

Residues cysteine 88 and histidine 130 each contribute to the Fe cation site. Glutamate 131 is a catalytic residue. Histidine 134 contributes to the Fe cation binding site.

It belongs to the polypeptide deformylase family. The cofactor is Fe(2+).

It catalyses the reaction N-terminal N-formyl-L-methionyl-[peptide] + H2O = N-terminal L-methionyl-[peptide] + formate. Removes the formyl group from the N-terminal Met of newly synthesized proteins. Requires at least a dipeptide for an efficient rate of reaction. N-terminal L-methionine is a prerequisite for activity but the enzyme has broad specificity at other positions. This Thermoanaerobacter pseudethanolicus (strain ATCC 33223 / 39E) (Clostridium thermohydrosulfuricum) protein is Peptide deformylase.